The primary structure comprises 207 residues: Phosphatidylinositol phosphate synthase (207 aa).

The next 2 helical transmembrane spans lie at 21–44 and 50–67; these read LRAHVTPDVVTWIGTIGAVLMALI and WLWQGPWLVTLFIFSDSL. An a CDP-1,2-diacyl-sn-glycerol-binding site is contributed by 28–31; it reads DVVT. The Mg(2+) site is built by Asp-65 and Asp-68. Gly-69, Arg-73, and Ser-79 together coordinate a CDP-1,2-diacyl-sn-glycerol. The Mg(2+) site is built by Asp-86 and Asp-90. 4 helical membrane-spanning segments follow: residues 88–106, 112–131, 152–170, and 176–195; these read TLDRFGDAAIFTGVALYFA, VLWTAMACAALVFGMATSYV, RLLVSLVAIEITGLARVGA, and VVALPIALCYLTLAGAITVV. The active-site Proton acceptor is the Asp-90.

It belongs to the CDP-alcohol phosphatidyltransferase class-I family. Homodimer. It depends on Mg(2+) as a cofactor.

The protein localises to the cell membrane. The catalysed reaction is a CDP-1,2-diacyl-sn-glycerol + 1D-myo-inositol 3-phosphate = a 1,2-diacyl-sn-glycero-3-phospho-(1D-myo-inositol-3-phosphate) + CMP + H(+). It carries out the reaction 1,2-di-(9Z-octadecenoyl)-sn-glycero-3-cytidine-5'-diphosphate + 1D-myo-inositol 3-phosphate = 1,2-di-(9Z-octadecenoyl)-sn-glycero-3-phospho-(1D-myo-inositol-3-phosphate) + CMP + H(+). The protein operates within phospholipid metabolism; phosphatidylinositol phosphate biosynthesis. Catalyzes the conjugation of the 1'-hydroxyl group of D-myo-inositol-3-phosphate (also named L-myo-inositol-1-phosphate) with a lipid tail of cytidine diphosphate diacylglycerol (CDP-DAG), forming phosphatidylinositol phosphate (PIP) and CMP. PIP is a precursor of phosphatidylinositol (PI) which is an essential lipid required for cell wall formation. The chain is Phosphatidylinositol phosphate synthase from Cutibacterium acnes (strain DSM 16379 / KPA171202) (Propionibacterium acnes).